A 396-amino-acid chain; its full sequence is MRDVFIVAAKRTPLGRFGGSLTNFSAADLGAHVMKSVLAQAGVGGDQLDLYIMGNVLRAGHGQLIPRQAALKAEIPDTVDGYAVDMVCSSAMMSVINAALTIRAGEGDLILAGGTESMSQTGFYLSHRARWGYKFLMGAPENLTDLLLHDGLTDSTNGEGMGEQTEKLAAEHGFSRIELDEVACLSQQRAAHATESGYFDSEIAPIEITSRKGTQVLASDEGIRSDTTVESLGKLRSAFAKDGVLTAGNCSQITDGAAALLLASGEAVEKYQLKPLAKILGGSWAAGTPSRFPELPITASQKLLAKLDKTLADFDLFENNEAFSVSNLLFERRLGVDRDKLNVNGGAIALGHPIGASGARIMVTLLYALQQRDKTLGLAALCHGTGGGTAIALERV.

C88 (acyl-thioester intermediate) is an active-site residue. Catalysis depends on proton acceptor residues H352 and C382.

The protein belongs to the thiolase-like superfamily. Thiolase family. Homotetramer.

It carries out the reaction 2 acetyl-CoA = acetoacetyl-CoA + CoA. Its pathway is biopolymer metabolism; poly-(R)-3-hydroxybutanoate biosynthesis. Functionally, when expressed in E.coli with Synechocystis PhaB, PhaC and PhaE confers the ability to synthesize up to 12% (w/w) poly(3-hydroxybutyrate) (PHB) depending on the carbon source. The protein is Acetyl-CoA acetyltransferase of Synechocystis sp. (strain ATCC 27184 / PCC 6803 / Kazusa).